We begin with the raw amino-acid sequence, 920 residues long: Probable transport protein MmpL7 (920 aa).

A run of 12 helical transmembrane segments spans residues 44–64 (LLVV…LTFT), 210–230 (ITAW…VLLL), 241–261 (AIVL…AAVV), 271–291 (VFSW…ATML), 311–331 (LPAF…LLLA), 344–364 (LGVF…IALA), 389–409 (SASA…IIGM), 761–781 (LIHD…LASM), 790–810 (AVGV…IALW), 822–842 (VPLV…VAGI), 864–884 (GAVA…VLVS), and 888–908 (FSVL…LITV).

It belongs to the resistance-nodulation-cell division (RND) (TC 2.A.6) family. MmpL subfamily.

The protein localises to the cell membrane. In Mycobacterium bovis (strain ATCC BAA-935 / AF2122/97), this protein is Probable transport protein MmpL7 (mmpL7).